The following is a 458-amino-acid chain: Phosphoglucosamine mutase (458 aa).

The active-site Phosphoserine intermediate is the Ser-108. Residues Ser-108, Asp-247, Asp-249, and Asp-251 each coordinate Mg(2+). Ser-108 bears the Phosphoserine mark.

Belongs to the phosphohexose mutase family. Mg(2+) serves as cofactor. Activated by phosphorylation.

It carries out the reaction alpha-D-glucosamine 1-phosphate = D-glucosamine 6-phosphate. Its function is as follows. Catalyzes the conversion of glucosamine-6-phosphate to glucosamine-1-phosphate. This is Phosphoglucosamine mutase from Nitrosomonas eutropha (strain DSM 101675 / C91 / Nm57).